A 176-amino-acid chain; its full sequence is Flavodoxin 1 (176 aa).

The region spanning 4–165 (HGIFFGSDTG…RVEKWVKQIS (162 aa)) is the Flavodoxin-like domain.

Belongs to the flavodoxin family. FMN is required as a cofactor.

In terms of biological role, low-potential electron donor to a number of redox enzymes. The polypeptide is Flavodoxin 1 (fldA) (Shigella flexneri).